The chain runs to 664 residues: 26S rRNA (cytosine-C(5))-methyltransferase nsun-1 (664 aa).

A disordered region spans residues 1–105 (MAIVKKKKVS…DDSDAGDHLP (105 aa)). Residues 38 to 52 (PKKKKLVKKVKKSAK) show a composition bias toward basic residues. The segment covering 53-68 (KAHEEEPIEQVEKLQL) has biased composition (basic and acidic residues). Residues 84 to 99 (SDDEDLRDDYSDDDSD) are compositionally biased toward acidic residues. S-adenosyl-L-methionine-binding positions include 313–319 (CSAPGGK), Asp-337, and Asp-382. The active-site Nucleophile is Cys-439. The tract at residues 513 to 664 (KMSKQGVMEK…RRKKMLAKQQ (152 aa)) is disordered. Positions 519 to 528 (VMEKEKEKAA) are enriched in basic and acidic residues. Over residues 541–550 (EASESSDDEE) the composition is skewed to acidic residues. Positions 563–572 (KPAKKQQQKK) are enriched in basic residues. The span at 606-618 (KAAEKQAAVKEDD) shows a compositional bias: basic and acidic residues. Composition is skewed to basic residues over residues 627–644 (KRAK…KRAA) and 652–664 (VKNR…AKQQ).

The protein belongs to the class I-like SAM-binding methyltransferase superfamily. RsmB/NOP family.

The protein resides in the nucleus. Its subcellular location is the nucleolus. The enzyme catalyses a cytidine in 26S rRNA + S-adenosyl-L-methionine = a 5-methylcytidine in 26S rRNA + S-adenosyl-L-homocysteine + H(+). Methyltransferase which methylates the carbon-5 position of cytosine 2982 to 5-methylcytosine (m5C2982) in 26S rRNA. May play a role in the translation of leucine and proline codons. May be required for the translation of specific mRNAs such as mRNAs involved in gonad development, collagen production and cuticle integrity. Plays a role in ensuring the correct localization of the germline-specific protein gld-1 during development. Not required for pre-rRNA processing, the production of mature 5S, 5.8S, 18S or 26S rRNAs or global translation. Plays a role in positively regulating fertility. The polypeptide is 26S rRNA (cytosine-C(5))-methyltransferase nsun-1 (Caenorhabditis elegans).